We begin with the raw amino-acid sequence, 248 residues long: Probable transcriptional regulatory protein RPD_4171 (248 aa).

Residues 1–22 (MAGHSQFKNIMHRKGKQDAQRS) are disordered.

Belongs to the TACO1 family.

It localises to the cytoplasm. The protein is Probable transcriptional regulatory protein RPD_4171 of Rhodopseudomonas palustris (strain BisB5).